We begin with the raw amino-acid sequence, 264 residues long: Teichoic acids export ATP-binding protein TagH (264 aa).

The region spanning 24–243 (IKDALIPKNK…YEQFLKDFKK (220 aa)) is the ABC transporter domain. 57-64 (GINGSGKS) serves as a coordination point for ATP.

Belongs to the ABC transporter superfamily. Teichoic acids exporter (TC 3.A.1.104.1) family. As to quaternary structure, the complex is composed of two ATP-binding proteins (TagH) and two transmembrane proteins (TagG).

The protein localises to the cell membrane. It carries out the reaction ATP + H2O + teichoic acidSide 1 = ADP + phosphate + teichoic acidSide 2.. In terms of biological role, part of the ABC transporter complex TagGH involved in teichoic acids export. Responsible for energy coupling to the transport system. The chain is Teichoic acids export ATP-binding protein TagH from Staphylococcus haemolyticus (strain JCSC1435).